The primary structure comprises 247 residues: L-cystine import ATP-binding protein TcyC (247 aa).

Residues 2–240 form the ABC transporter domain; it reads LTVKGLNKSF…PKEERTQRFL (239 aa). 34–41 contacts ATP; it reads GPSGSGKT.

This sequence belongs to the ABC transporter superfamily. L-cystine importer (TC 3.A.1.3.14) family. In terms of assembly, the complex is composed of two ATP-binding proteins (TcyC), two transmembrane proteins (TcyB) and a solute-binding protein (TcyA).

Its subcellular location is the cell membrane. In terms of biological role, part of the ABC transporter complex TcyABC involved in L-cystine import. Responsible for energy coupling to the transport system. This chain is L-cystine import ATP-binding protein TcyC (tcyC), found in Bacillus subtilis (strain 168).